The chain runs to 412 residues: MKIYRVGGSVRDELLGLPVKDQDYVVVGATPEEMVRLGYRPVGKDFPVFLHPETHEQYALARTERKIARGYKGFEVYAAPGVTLQEDLARRDLTINAMARDEAGDIVDPFGGIADLQAGILRHIGPAFVEDPVRVLRVARFAARFGFQIAPETLELMKEIVHTGETEALVPERVWQEIAHGLMESHPSRMFYVLRECGALARILPEVDALFGVPQPAHAHPEIDTGIHVMMVIDHAASKQYPLEVRFAGLTHDLGKGTTSPDEWPRHIGHEARSVELVMGLCERIRVPGESRDLALLVARFHGDVHRALELRPATIADMLQATDAYRKKARFQAFLQACASDFHGRPGFADKPYPQKEHLSRALQVAVDVDAGAIAMQLNQSHAGKADLPMRINRQVYAARVERISSLLSHL.

ATP contacts are provided by Gly8 and Arg11. CTP-binding residues include Gly8 and Arg11. Residues Asp21 and Asp23 each contribute to the Mg(2+) site. ATP contacts are provided by Arg91, Arg137, and Arg140. Positions 91, 137, and 140 each coordinate CTP. The HD domain maps to 225-326; it reads TGIHVMMVID…ADMLQATDAY (102 aa).

The protein belongs to the tRNA nucleotidyltransferase/poly(A) polymerase family. Bacterial CCA-adding enzyme type 1 subfamily. Monomer. Can also form homodimers and oligomers. It depends on Mg(2+) as a cofactor. Ni(2+) serves as cofactor.

It carries out the reaction a tRNA precursor + 2 CTP + ATP = a tRNA with a 3' CCA end + 3 diphosphate. It catalyses the reaction a tRNA with a 3' CCA end + 2 CTP + ATP = a tRNA with a 3' CCACCA end + 3 diphosphate. Its function is as follows. Catalyzes the addition and repair of the essential 3'-terminal CCA sequence in tRNAs without using a nucleic acid template. Adds these three nucleotides in the order of C, C, and A to the tRNA nucleotide-73, using CTP and ATP as substrates and producing inorganic pyrophosphate. tRNA 3'-terminal CCA addition is required both for tRNA processing and repair. Also involved in tRNA surveillance by mediating tandem CCA addition to generate a CCACCA at the 3' terminus of unstable tRNAs. While stable tRNAs receive only 3'-terminal CCA, unstable tRNAs are marked with CCACCA and rapidly degraded. In Nitrosomonas europaea (strain ATCC 19718 / CIP 103999 / KCTC 2705 / NBRC 14298), this protein is Multifunctional CCA protein.